A 228-amino-acid polypeptide reads, in one-letter code: MSKISSKISSVDQEKFQAFLQQILRNVKTQEDPRVLDAYRRLFRKSVPFSMRSYVAAHLAHTHCRAGATAGSTRRTGAREGIRTGSAHAPSCASAPASAARARDFERKARDYPALCPGDTTSIFISIGKNRHIYPRDIIALLMQRADVAREHIGTIRILDHYSFIQVLSGEAEAVIARLNGLFYRGRTLTVSHSRRADEHPAPSTEPHAAAVAPEPDFMAEPIPALEE.

The segment at 194–228 is disordered; that stretch reads SRRADEHPAPSTEPHAAAVAPEPDFMAEPIPALEE.

This is an uncharacterized protein from Treponema pallidum (strain Nichols).